The sequence spans 178 residues: Oligoribonuclease (178 aa).

The Exonuclease domain occupies 7–168 (LIWIDLEMTG…DDIRESIAEL (162 aa)). Y128 is a catalytic residue.

It belongs to the oligoribonuclease family.

It is found in the cytoplasm. Functionally, 3'-to-5' exoribonuclease specific for small oligoribonucleotides. This Pseudomonas savastanoi pv. phaseolicola (strain 1448A / Race 6) (Pseudomonas syringae pv. phaseolicola (strain 1448A / Race 6)) protein is Oligoribonuclease.